We begin with the raw amino-acid sequence, 408 residues long: MTQQKMDIKNVVLAYSGGLDTSIILKWLKNEYGCRVVAFSADLGQGEELDPVREKALATGADVVYIDDLREEFVRDFVFPMFRANAIYEGHYLLGTSIARPLIAKRQMEIAAKEGCDAVSHGSTGKGNDQVRFELGYYHFNPNIKIVAPWRTWDLNSRQALIDYAKKNGIPVPVTKKRPWSSDRNLLHISFEGGILEDTWAEAPEEMYVLTTAPEKAPNKPQYVEIEFKNGNAVAVDGEKMTPAQLLAHLNYLGGQHGIGRVDLLENRSVGMKSRGVYETPGGTILREAHMAVEQITMDREVMRIRDGLIPEYARLVYAGYWFSPEREMLQALIDDSQKCVNGVARLKLYKGYCRTVGRKSDTDSLFNQDFATFEKDQVYNQADAEGFIRINSLRLRIRSMMQAAKKK.

ATP-binding positions include 14 to 22 and alanine 41; that span reads AYSGGLDTS. Residues tyrosine 92 and serine 97 each coordinate L-citrulline. Glycine 122 serves as a coordination point for ATP. 3 residues coordinate L-aspartate: threonine 124, asparagine 128, and aspartate 129. Asparagine 128 provides a ligand contact to L-citrulline. Residues arginine 132, serine 181, serine 190, glutamate 266, and tyrosine 278 each contribute to the L-citrulline site.

This sequence belongs to the argininosuccinate synthase family. Type 1 subfamily. As to quaternary structure, homotetramer.

The protein localises to the cytoplasm. It catalyses the reaction L-citrulline + L-aspartate + ATP = 2-(N(omega)-L-arginino)succinate + AMP + diphosphate + H(+). It functions in the pathway amino-acid biosynthesis; L-arginine biosynthesis; L-arginine from L-ornithine and carbamoyl phosphate: step 2/3. The polypeptide is Argininosuccinate synthase (Pelobacter propionicus (strain DSM 2379 / NBRC 103807 / OttBd1)).